Consider the following 194-residue polypeptide: Holliday junction branch migration complex subunit RuvA (194 aa).

The segment at methionine 1–leucine 64 is domain I. The interval serine 65–serine 140 is domain II. Residues serine 140–lysine 144 are flexible linker. Residues leucine 145–cysteine 194 are domain III.

The protein belongs to the RuvA family. As to quaternary structure, homotetramer. Forms an RuvA(8)-RuvB(12)-Holliday junction (HJ) complex. HJ DNA is sandwiched between 2 RuvA tetramers; dsDNA enters through RuvA and exits via RuvB. An RuvB hexamer assembles on each DNA strand where it exits the tetramer. Each RuvB hexamer is contacted by two RuvA subunits (via domain III) on 2 adjacent RuvB subunits; this complex drives branch migration. In the full resolvosome a probable DNA-RuvA(4)-RuvB(12)-RuvC(2) complex forms which resolves the HJ.

Its subcellular location is the cytoplasm. In terms of biological role, the RuvA-RuvB-RuvC complex processes Holliday junction (HJ) DNA during genetic recombination and DNA repair, while the RuvA-RuvB complex plays an important role in the rescue of blocked DNA replication forks via replication fork reversal (RFR). RuvA specifically binds to HJ cruciform DNA, conferring on it an open structure. The RuvB hexamer acts as an ATP-dependent pump, pulling dsDNA into and through the RuvAB complex. HJ branch migration allows RuvC to scan DNA until it finds its consensus sequence, where it cleaves and resolves the cruciform DNA. The polypeptide is Holliday junction branch migration complex subunit RuvA (Xylella fastidiosa (strain M12)).